Here is a 329-residue protein sequence, read N- to C-terminus: Protein-arginine N-acetylglucosaminyltransferase NleB1 (329 aa).

Residue arginine 13 is glycosylated (N-beta-linked (GlcNAc) arginine; by autocatalysis). Residue 48 to 50 participates in UDP-N-acetyl-alpha-D-glucosamine binding; sequence QWF. Arginine 53 carries N-beta-linked (GlcNAc) arginine; by autocatalysis glycosylation. Tyrosine 72 is a binding site for UDP-N-acetyl-alpha-D-glucosamine. Arginine 159 is a glycosylation site (N-beta-linked (GlcNAc) arginine; by autocatalysis). 219 to 222 is a binding site for UDP-N-acetyl-alpha-D-glucosamine; that stretch reads YLDA. Positions 221 to 223 match the DXD motif motif; that stretch reads DAD. Position 223 (aspartate 223) interacts with Mn(2+). Glutamate 253 serves as the catalytic Proton acceptor. N-beta-linked (GlcNAc) arginine; by autocatalysis glycosylation occurs at arginine 293. Residues asparagine 320 and serine 322 each coordinate Mn(2+). UDP-N-acetyl-alpha-D-glucosamine-binding positions include serine 322 and 327–329; that span reads SSW.

The protein belongs to the glycosyltransferase NleB family. Requires Mn(2+) as cofactor. Post-translationally, auto-glycosylated: arginine GlcNAcylation is required for activity toward death domain-containing host target proteins.

The protein localises to the secreted. It is found in the host cytoplasm. It carries out the reaction L-arginyl-[protein] + UDP-N-acetyl-alpha-D-glucosamine = N(omega)-(N-acetyl-beta-D-glucosaminyl)-L-arginyl-[protein] + UDP + H(+). Functionally, protein-arginine N-acetylglucosaminyltransferase effector that disrupts TNF signaling in infected cells, including NF-kappa-B signaling, apoptosis and necroptosis. Acts by catalyzing the transfer of a single N-acetylglucosamine (GlcNAc) to a conserved arginine residue in the death domain of host proteins FADD, TRADD, FAS, TNFRSF1A/TNFR1, TNFRSF25/DR3 and RIPK1: arginine GlcNAcylation prevents homotypic/heterotypic death domain interactions and assembly of the oligomeric TNF-alpha receptor complex, thereby disrupting TNF signaling. Has preference for host FADD as substrate compared to other death domain-containing proteins. Also acts on host proteins without a death domain: catalyzes arginine GlcNAcylation of HIF1A, thereby regulating host glucose metabolism. Also displays intra-bacterial activity by mediating GlcNAcylation of glutathione synthetase GshB. Catalyzes auto-GlcNAcylation, which is required for activity toward death domain-containing host target proteins. Shows a higher enzymatic activity than NleB2. The chain is Protein-arginine N-acetylglucosaminyltransferase NleB1 from Escherichia coli O127:H6 (strain E2348/69 / EPEC).